The sequence spans 652 residues: MSVTESKAKTERKSSRKPAKTQETVLSALLAQTEEVSVPLASLIKSPLNVRTVPYSAESVSELADSIKGVGLLQNLVVHALPGDRYGVAAGGRRLAALNMLAERDIIPADWPVRVKVIPQELATAASMTENGHRRDMHPAEQIAGFRAMAQEGKTPAQIGDLLGYSPRHVQRMLKLADLAPVILDALAEDRITTEHCQALALENDTARQVQVFEAACQSGWGGKPEVQTIRRLVTESEVAVAGNSKFRFVGADTFSPDELRTDLFSDDEGGYVDCVALDAALLEKLQAVAEHLREAEGWEWCAGRMEPVGFCREDAGTYRSLPEPEAVLTEAEEERLNELMARYDALENQCEESDLLEAEMKLMRCMAKVRAWTPEMRAGSGVVVSWRYGNVCVQRGVQLRSEDDVADNDYRTEQVQEKASVEEISLPLLTKMSSERTLAVQAALMQQSDKSLALLAWTLCLNVFGSGAYSNPARIRLECEHYSLTSDAPSGKEGAAFMAMMAEKARLAALLPDGWARDMTTFLSLSQEVLLSLLSFCTACSIHGVQTREYGHTSRSPLDTLESAIGFHMRDWWQPTKANFFGHLKKPQIIAALNEAGLSGAARDAEKMKKGDAAEHAEHHMKDNRWVPGWMCAPRPQTDATERTDNLADAA.

Composition is skewed to basic and acidic residues over residues 1–13 (MSVT…TERK) and 641–652 (ATERTDNLADAA). 2 disordered regions span residues 1–21 (MSVT…PAKT) and 628–652 (VPGW…ADAA).

This sequence belongs to the ParB family.

This is an uncharacterized protein from Escherichia coli O157:H7.